We begin with the raw amino-acid sequence, 257 residues long: Adenylate kinase (257 aa).

Residue 52-57 (GAGKGT) participates in ATP binding. The interval 72–101 (ATGDMLRSQVAKKTELGKEAKKIMDQGGLV) is NMP. AMP-binding positions include threonine 73, arginine 78, 99–101 (GLV), 128–131 (GFPR), and glutamine 135. Residues 169–206 (GRLVHPASGRSYHKIFNPPKNDMKDDVTGEPLIQRSDD) are LID. Residues arginine 170 and 179 to 180 (SY) contribute to the ATP site. The AMP site is built by arginine 203 and arginine 214. Residue glutamine 242 coordinates ATP.

This sequence belongs to the adenylate kinase family. AK2 subfamily. In terms of assembly, monomer.

The protein localises to the cytoplasm. The protein resides in the cytosol. Its subcellular location is the mitochondrion intermembrane space. The enzyme catalyses AMP + ATP = 2 ADP. Functionally, catalyzes the reversible transfer of the terminal phosphate group between ATP and AMP. Plays an important role in cellular energy homeostasis and in adenine nucleotide metabolism. Adenylate kinase activity is critical for regulation of the phosphate utilization and the AMP de novo biosynthesis pathways. The sequence is that of Adenylate kinase (adk1) from Aspergillus fumigatus (strain CBS 144.89 / FGSC A1163 / CEA10) (Neosartorya fumigata).